Reading from the N-terminus, the 78-residue chain is Large ribosomal subunit protein bL28 (78 aa).

Residues 1–30 (MAAHCQVTGAQPGFGHSISHSHRRTKRRWN) are disordered. Residues 19–30 (SHSHRRTKRRWN) show a composition bias toward basic residues.

The protein belongs to the bacterial ribosomal protein bL28 family.

The protein is Large ribosomal subunit protein bL28 of Kocuria rhizophila (strain ATCC 9341 / DSM 348 / NBRC 103217 / DC2201).